Here is a 590-residue protein sequence, read N- to C-terminus: V-type ATP synthase alpha chain (590 aa).

231-238 is an ATP binding site; that stretch reads GPFGSGKT.

This sequence belongs to the ATPase alpha/beta chains family.

The catalysed reaction is ATP + H2O + 4 H(+)(in) = ADP + phosphate + 5 H(+)(out). Functionally, produces ATP from ADP in the presence of a proton gradient across the membrane. The V-type alpha chain is a catalytic subunit. This is V-type ATP synthase alpha chain from Clostridium botulinum (strain Langeland / NCTC 10281 / Type F).